The following is a 406-amino-acid chain: Exo-alpha-sialidase (406 aa).

Positions M1 to A20 are cleaved as a signal peptide. The substrate site is built by R59, R78, D84, and Q148. N-linked (GlcNAc...) asparagine glycosylation occurs at N235. Residues R265, R322, R322–R323, Y331–D332, K337, Y358, D376, and D376–F378 contribute to the substrate site. N396 is a glycosylation site (N-linked (GlcNAc...) asparagine).

Belongs to the glycosyl hydrolase 33 family.

The enzyme catalyses Hydrolysis of alpha-(2-&gt;3)-, alpha-(2-&gt;6)-, alpha-(2-&gt;8)- glycosidic linkages of terminal sialic acid residues in oligosaccharides, glycoproteins, glycolipids, colominic acid and synthetic substrates.. Its function is as follows. Sialidase is able to release sialic acid from a wide variety of natural substrates including bovine salivary mucin, colominic acid, bovine fetuin, a serum glycoprotein containing both alpha-2-6 and alpha-2-3-linkages in a ratio of about 3:2, and glycoproteins and glycolipids from thermally denatured human lung epithelial cells. Does not show any trans-sialidase activity since it is able to remove terminal sialic acid residues but is unable to catalyze their transfer to the acceptor substrate. 2-keto-3-deoxynononic acid (KDN) is the preferred substrate and A.fumigatus can utilize KDN as a sole carbon source. This chain is Exo-alpha-sialidase, found in Aspergillus fumigatus (strain ATCC MYA-4609 / CBS 101355 / FGSC A1100 / Af293) (Neosartorya fumigata).